The chain runs to 279 residues: Phosphatidylglycerol--prolipoprotein diacylglyceryl transferase (279 aa).

A run of 3 helical transmembrane segments spans residues 18–38, 55–75, and 89–109; these read LSVR…YFVA, IIFY…VIFQ, and IWHG…AGVI. Arginine 137 lines the a 1,2-diacyl-sn-glycero-3-phospho-(1'-sn-glycerol) pocket. 2 helical membrane passes run 203 to 223 and 235 to 255; these read LGET…FIEG and IRVA…LIVY.

Belongs to the Lgt family.

It localises to the cell membrane. It catalyses the reaction L-cysteinyl-[prolipoprotein] + a 1,2-diacyl-sn-glycero-3-phospho-(1'-sn-glycerol) = an S-1,2-diacyl-sn-glyceryl-L-cysteinyl-[prolipoprotein] + sn-glycerol 1-phosphate + H(+). It participates in protein modification; lipoprotein biosynthesis (diacylglyceryl transfer). In terms of biological role, catalyzes the transfer of the diacylglyceryl group from phosphatidylglycerol to the sulfhydryl group of the N-terminal cysteine of a prolipoprotein, the first step in the formation of mature lipoproteins. The chain is Phosphatidylglycerol--prolipoprotein diacylglyceryl transferase from Staphylococcus aureus (strain USA300).